A 238-amino-acid chain; its full sequence is MDYEKFLLFGDSITEFAFNTRPIEDGKDQYALGAALVNEYTRKMDILQRGFKGYTSRWALKILPEILKHESNIVMATIFLGANDACSAGPQSVPLPEFIDNIRQMVSLMKSYHIRPIIIGPGLVDREKWEKEKSEEIALGYFRTNENFAIYSDALAKLANEEKVPFVALNKAFQQEGGDAWQQLLTDGLHFSGKGYKIFHDELLKVIETFYPQYHPKNMQYKLKDWRDVLDDGSNIMS.

Residue S12 is the Nucleophile of the active site. D187 functions as the Proton donor in the catalytic mechanism. The active-site Proton acceptor is the H190.

It belongs to the 'GDSL' lipolytic enzyme family. IAH1 subfamily. In terms of assembly, homodimer.

It carries out the reaction 3-methylbutyl acetate + H2O = 3-methylbutanol + acetate + H(+). In terms of biological role, plays a crucial role in the hydrolysis of isoamyl acetate in sake mash. Hydrolyzes short chain esters from acetate (C2) to hexanoate (C6), showing more specificity for shorter chain exters. No activity for decanoate (C10) esters. The polypeptide is Isoamyl acetate-hydrolyzing esterase (Saccharomyces cerevisiae (strain ATCC 204508 / S288c) (Baker's yeast)).